A 616-amino-acid chain; its full sequence is Large ribosomal subunit assembly factor BipA (616 aa).

A tr-type G domain is found at 8–204 (KKLRNIAIIA…AIVKHVEPPK (197 aa)). GTP contacts are provided by residues 20–25 (DHGKTT) and 134–137 (NKVD).

Belongs to the TRAFAC class translation factor GTPase superfamily. Classic translation factor GTPase family. BipA subfamily. In terms of assembly, monomer.

It localises to the cytoplasm. It carries out the reaction GTP + H2O = GDP + phosphate + H(+). Functionally, a 50S ribosomal subunit assembly protein with GTPase activity, required for 50S subunit assembly at low temperatures, may also play a role in translation. Binds GTP and analogs. Binds the 70S ribosome between the 30S and 50S subunits, in a similar position as ribosome-bound EF-G; it contacts a number of ribosomal proteins, both rRNAs and the A-site tRNA. The sequence is that of Large ribosomal subunit assembly factor BipA from Haemophilus influenzae (strain ATCC 51907 / DSM 11121 / KW20 / Rd).